Reading from the N-terminus, the 416-residue chain is Gamma-glutamyl phosphate reductase (416 aa).

Belongs to the gamma-glutamyl phosphate reductase family.

It is found in the cytoplasm. It catalyses the reaction L-glutamate 5-semialdehyde + phosphate + NADP(+) = L-glutamyl 5-phosphate + NADPH + H(+). It participates in amino-acid biosynthesis; L-proline biosynthesis; L-glutamate 5-semialdehyde from L-glutamate: step 2/2. Its function is as follows. Catalyzes the NADPH-dependent reduction of L-glutamate 5-phosphate into L-glutamate 5-semialdehyde and phosphate. The product spontaneously undergoes cyclization to form 1-pyrroline-5-carboxylate. This chain is Gamma-glutamyl phosphate reductase, found in Vibrio vulnificus (strain YJ016).